We begin with the raw amino-acid sequence, 234 residues long: Uridylate kinase (234 aa).

9-10 (GS) provides a ligand contact to ATP. Residue glycine 43 participates in UMP binding. Residues glycine 44 and arginine 48 each coordinate ATP. UMP-binding positions include aspartate 65 and 113–119 (VIPGQTT). Residues threonine 139, tyrosine 145, and aspartate 148 each coordinate ATP.

The protein belongs to the UMP kinase family. In terms of assembly, homohexamer.

It localises to the cytoplasm. It catalyses the reaction UMP + ATP = UDP + ADP. Its pathway is pyrimidine metabolism; CTP biosynthesis via de novo pathway; UDP from UMP (UMPK route): step 1/1. Its activity is regulated as follows. Inhibited by UTP. In terms of biological role, catalyzes the reversible phosphorylation of UMP to UDP. The chain is Uridylate kinase from Methanococcoides burtonii (strain DSM 6242 / NBRC 107633 / OCM 468 / ACE-M).